Here is a 278-residue protein sequence, read N- to C-terminus: Octanoyltransferase LipM (278 aa).

The region spanning 33–248 (KKMPPTIRFY…GFEKGLDVEL (216 aa)) is the BPL/LPL catalytic domain. The active-site Acyl-thioester intermediate is the Cys-150.

The protein belongs to the octanoyltransferase LipM family. As to quaternary structure, monomer.

It carries out the reaction octanoyl-[ACP] + L-lysyl-[protein] = N(6)-octanoyl-L-lysyl-[protein] + holo-[ACP] + H(+). It functions in the pathway protein modification; protein lipoylation via endogenous pathway; protein N(6)-(lipoyl)lysine from octanoyl-[acyl-carrier-protein]. Functionally, catalyzes the transfer of endogenously produced octanoic acid from octanoyl-acyl-carrier-protein onto the lipoyl domain of GcvH, an intermediate carrier during protein lipoylation. In Bacillus cereus (strain ATCC 14579 / DSM 31 / CCUG 7414 / JCM 2152 / NBRC 15305 / NCIMB 9373 / NCTC 2599 / NRRL B-3711), this protein is Octanoyltransferase LipM.